The sequence spans 450 residues: Cyclic GMP-AMP phosphodiesterase SMPDL3A (450 aa).

Residues 1–22 (MARLGALVCCLLAAWHCRPGLG) form the signal peptide. Residues Asp-42 and His-44 each contribute to the Zn(2+) site. Cys-59 and Cys-78 are oxidised to a cystine. Asp-107 serves as a coordination point for Zn(2+). An ATP-binding site is contributed by His-111. Residues Asn-124 and Asn-128 are each glycosylated (N-linked (GlcNAc...) asparagine). Asn-148 provides a ligand contact to Zn(2+). ATP contacts are provided by Asn-148 and His-149. 2 N-linked (GlcNAc...) asparagine glycosylation sites follow: Asn-219 and Asn-235. Zn(2+) contacts are provided by His-249, His-290, and His-292. N-linked (GlcNAc...) asparagine glycosylation is found at Asn-353 and Asn-370. Disulfide bonds link Cys-417–Cys-421 and Cys-427–Cys-440.

This sequence belongs to the acid sphingomyelinase family. In terms of assembly, monomer. Homodimer; homodimerizes following 2',3'-cGAMP-binding. The cofactor is Zn(2+).

It localises to the secreted. The enzyme catalyses 2',3'-cGAMP + H2O = 5'-pGpA(2'-5') + H(+). The catalysed reaction is 5'-pGpA(2'-5') + H2O = 5'-GpA(2'-5') + phosphate. It carries out the reaction a ribonucleoside 5'-triphosphate + H2O = a ribonucleoside 5'-diphosphate + phosphate + H(+). It catalyses the reaction ATP + H2O = ADP + phosphate + H(+). In terms of biological role, cyclic-nucleotide phosphodiesterase that acts as a negative regulator of innate immunity by mediating degradation of 2',3'-cGAMP, thereby inhibiting the cGAS-STING signaling. Specifically linearizes 2',3'-cGAMP into 2'5'-bond pGpA and further hydrolyzes pGpA to produce GpA. Also has in vitro nucleotide phosphodiesterase activity with nucleoside triphosphates, such as ATP. Has in vitro activity with p-nitrophenyl-TMP. Has lower activity with nucleoside diphosphates, and no activity with nucleoside monophosphates. Has in vitro activity with CDP-choline, giving rise to CMP and phosphocholine. Has in vitro activity with CDP-ethanolamine. Does not have sphingomyelin phosphodiesterase activity. This chain is Cyclic GMP-AMP phosphodiesterase SMPDL3A (SMPDL3A), found in Bos taurus (Bovine).